We begin with the raw amino-acid sequence, 336 residues long: MLQSLAGSSCVRLVERHRSAWCFGLLVLGYLLYLVFGAVVFSSVELPYEDLLRQELRKLKRRFLEEHECLSEPQLEQFLGRVLEASNYGVSVLSNASGNWNWDFTSALFFASTVLSTTGYGHTVPLSDGGKAFCIIYSVIGIPFTLLFLTAVVQRITVHVTRRPVLYFHIRWGFSKQMVGIVHAVVLGFVTVSCFFFIPAAVFSVLEDDWNFLESFYFCFISLSTIGLGDYVPGEGYNQKFRELYKIGITCYLLLGLIAMLVVLETFCELHELKKFRKMFYVKKDKDEDQVHIVEHDQLSFSSITDQAASVKEEQKQSEPFVAAQVSAYAEDSASH.

The Cytoplasmic portion of the chain corresponds to 1 to 20 (MLQSLAGSSCVRLVERHRSA). A helical transmembrane segment spans residues 21–41 (WCFGLLVLGYLLYLVFGAVVF). Residues 42-103 (SSVELPYEDL…SNASGNWNWD (62 aa)) are Extracellular-facing. An N-linked (GlcNAc...) asparagine glycan is attached at N95. The helical intramembrane region spans 104–116 (FTSALFFASTVLS). An intramembrane segment occupies 117 to 122 (TTGYGH). The tract at residues 117–122 (TTGYGH) is selectivity filter 1. Over 123-132 (TVPLSDGGKA) the chain is Extracellular. The chain crosses the membrane as a helical span at residues 133 to 156 (FCIIYSVIGIPFTLLFLTAVVQRI). Residues 157 to 181 (TVHVTRRPVLYFHIRWGFSKQMVGI) are Cytoplasmic-facing. The chain crosses the membrane as a helical span at residues 182–202 (VHAVVLGFVTVSCFFFIPAAV). The Extracellular portion of the chain corresponds to 203-211 (FSVLEDDWN). The segment at residues 212–224 (FLESFYFCFISLS) is an intramembrane region (helical). Residues 225 to 230 (TIGLGD) form a selectivity filter 2 region. Residues 225-231 (TIGLGDY) lie within the membrane without spanning it. Residues 232–243 (VPGEGYNQKFRE) are Extracellular-facing. A helical transmembrane segment spans residues 244–267 (LYKIGITCYLLLGLIAMLVVLETF). The Cytoplasmic segment spans residues 268-336 (CELHELKKFR…SAYAEDSASH (69 aa)). Residue K274 forms a Glycyl lysine isopeptide (Lys-Gly) (interchain with G-Cter in SUMO) linkage. An important for intracellular retention in recycling endosomes region spans residues 293–299 (IVEHDQL).

Belongs to the two pore domain potassium channel (TC 1.A.1.8) family. As to quaternary structure, homodimer; disulfide-linked. Heterodimer with KCNK2; disulfide-linked. In astrocytes, forms mostly heterodimeric potassium channels with KCNK2, with only a minor proportion of functional channels containing homodimeric KCNK1. Interacts with KCNK3 and KCNK9, forming functional heterodimeric channels. Interacts with GNG4. Identified in a complex with PSD and ARF6; interacts only with PSD that is bound to ARF6. Interacts with UBE2I. Sumoylation is controversial. Sumoylated by UBE2I. Not sumoylated when expressed in xenopus oocytes or mammalian cells. Sumoylation inactivates the channel, but does not interfere with expression at the cell membrane. Sumoylation of a single subunit is sufficient to silence the dimeric channel. Sumoylation of KCNK1 is sufficient to silence heterodimeric channels formed by KCNK1 and KCNK3 or KCNK9. Desumoylated by SENP1; this activates the channel. Desumoylated by SENP1; this strongly increases halothane-mediated activation of heterodimeric channels formed with KCNK9. SENP1 treatment has no effect.

The protein resides in the cell membrane. The protein localises to the recycling endosome. It localises to the synaptic cell membrane. It is found in the cytoplasmic vesicle. Its subcellular location is the perikaryon. The protein resides in the cell projection. The protein localises to the dendrite. It localises to the apical cell membrane. The enzyme catalyses K(+)(in) = K(+)(out). It carries out the reaction NH4(+)(in) = NH4(+)(out). The catalysed reaction is Na(+)(in) = Na(+)(out). It catalyses the reaction Rb(+)(in) = Rb(+)(out). The enzyme catalyses Cs(+)(in) = Cs(+)(out). It carries out the reaction Li(+)(in) = Li(+)(out). The catalysed reaction is L-glutamate(out) = L-glutamate(in). It catalyses the reaction chloride(in) = chloride(out). In terms of biological role, ion channel that contributes to passive transmembrane potassium transport and to the regulation of the resting membrane potential in brain astrocytes, but also in kidney and in other tissues. Forms dimeric channels through which potassium ions pass in accordance with their electrochemical gradient. The channel is selective for K(+) ions at physiological potassium concentrations and at neutral pH, but becomes permeable to Na(+) at subphysiological K(+) levels and upon acidification of the extracellular medium. The homodimer has very low potassium channel activity, when expressed in heterologous systems, and can function as weakly inward rectifying potassium channel. Channel activity is modulated by activation of serotonin receptors. Heterodimeric channels containing KCNK1 and KCNK2 have much higher activity, and may represent the predominant form in astrocytes. Heterodimeric channels containing KCNK1 and KCNK3 or KCNK9 have much higher activity. Heterodimeric channels formed by KCNK1 and KCNK9 may contribute to halothane-sensitive currents. Mediates outward rectifying potassium currents in dentate gyrus granule cells and contributes to the regulation of their resting membrane potential. Contributes to the regulation of action potential firing in dentate gyrus granule cells and down-regulates their intrinsic excitability. In astrocytes, the heterodimer formed by KCNK1 and KCNK2 is required for rapid glutamate release in response to activation of G-protein coupled receptors, such as F2R and CNR1. Required for normal ion and water transport in the kidney. Contributes to the regulation of the resting membrane potential of pancreatic beta cells. The low channel activity of homodimeric KCNK1 may be due to sumoylation. The low channel activity may be due to rapid internalization from the cell membrane and retention in recycling endosomes. Permeable to monovalent cations with ion selectivity for K(+) &gt; Rb(+) &gt;&gt; NH4(+) &gt;&gt; Cs(+) = Na(+) = Li(+). This is Potassium channel subfamily K member 1 from Cavia porcellus (Guinea pig).